The sequence spans 408 residues: Glucose-1-phosphate adenylyltransferase (408 aa).

Alpha-D-glucose 1-phosphate-binding positions include Tyr100, Gly165, 180–181, and Ser198; that span reads EK.

It belongs to the bacterial/plant glucose-1-phosphate adenylyltransferase family. Homotetramer.

The enzyme catalyses alpha-D-glucose 1-phosphate + ATP + H(+) = ADP-alpha-D-glucose + diphosphate. It functions in the pathway glycan biosynthesis; glycogen biosynthesis. Its function is as follows. Involved in the biosynthesis of ADP-glucose, a building block required for the elongation reactions to produce glycogen. Catalyzes the reaction between ATP and alpha-D-glucose 1-phosphate (G1P) to produce pyrophosphate and ADP-Glc. This chain is Glucose-1-phosphate adenylyltransferase, found in Cutibacterium acnes (strain DSM 16379 / KPA171202) (Propionibacterium acnes).